Reading from the N-terminus, the 318-residue chain is ATP-dependent (S)-NAD(P)H-hydrate dehydratase (318 aa).

One can recognise a YjeF C-terminal domain in the interval 3 to 313 (AREVFKRVIP…KEIGPAFDSL (311 aa)). Residues glycine 119 and 172-178 (NTNEFKR) each bind (6S)-NADPHX. ATP is bound by residues 210–214 (KGSKD) and 229–238 (TSLRRCGGQG). A (6S)-NADPHX-binding site is contributed by aspartate 239.

It belongs to the NnrD/CARKD family. Requires Mg(2+) as cofactor.

The protein resides in the cytoplasm. The catalysed reaction is (6S)-NADHX + ATP = ADP + phosphate + NADH + H(+). It catalyses the reaction (6S)-NADPHX + ATP = ADP + phosphate + NADPH + H(+). In terms of biological role, catalyzes the dehydration of the S-form of NAD(P)HX at the expense of ATP, which is converted to ADP. Together with NAD(P)HX epimerase, which catalyzes the epimerization of the S- and R-forms, the enzyme allows the repair of both epimers of NAD(P)HX, a damaged form of NAD(P)H that is a result of enzymatic or heat-dependent hydration. This is ATP-dependent (S)-NAD(P)H-hydrate dehydratase from Batrachochytrium dendrobatidis (strain JAM81 / FGSC 10211) (Frog chytrid fungus).